The sequence spans 149 residues: Nucleoside diphosphate kinase 1 (149 aa).

Position 1 is an N-acetylmethionine (M1). ATP-binding residues include K9, F57, R85, T91, R102, and N112. Catalysis depends on H115, which acts as the Pros-phosphohistidine intermediate.

It belongs to the NDK family. In terms of assembly, interacts with CAT1, CAT2 and CAT3. Mg(2+) serves as cofactor.

Its subcellular location is the peroxisome. The protein resides in the nucleus. The protein localises to the cytoplasm. It carries out the reaction a 2'-deoxyribonucleoside 5'-diphosphate + ATP = a 2'-deoxyribonucleoside 5'-triphosphate + ADP. The enzyme catalyses a ribonucleoside 5'-diphosphate + ATP = a ribonucleoside 5'-triphosphate + ADP. Functionally, major role in the synthesis of nucleoside triphosphates other than ATP. The ATP gamma phosphate is transferred to the NDP beta phosphate via a ping-pong mechanism, using a phosphorylated active-site intermediate. Plays a role in response to reactive oxygen species (ROS) stress. The chain is Nucleoside diphosphate kinase 1 (NDK1) from Arabidopsis thaliana (Mouse-ear cress).